The chain runs to 495 residues: Probable aspartic-type endopeptidase OPSB (495 aa).

The N-terminal stretch at 1–19 (MRGDSFIWSLATAIPLLST) is a signal peptide. Residues 73–408 (YFCNLTLGTP…DLDNNEISIA (336 aa)) form the Peptidase A1 domain. N-linked (GlcNAc...) asparagine glycosylation is present at asparagine 76. The active site involves aspartate 91. N-linked (GlcNAc...) asparagine glycosylation is present at asparagine 136. Aspartate 290 is a catalytic residue. The N-linked (GlcNAc...) asparagine glycan is linked to asparagine 413. The disordered stretch occupies residues 448-470 (TGLPGVETGVPGSRPPSSKAAGQ). A lipid anchor (GPI-anchor amidated alanine) is attached at alanine 467. Residues 468-495 (AGQAKRPDFVLGVAAVGLAGAGMLFAAM) constitute a propeptide, removed in mature form.

The protein belongs to the peptidase A1 family.

It is found in the cell membrane. Its function is as follows. Probable GPI-anchored aspartic-type endopeptidase which contributes to virulence. The chain is Probable aspartic-type endopeptidase OPSB (OPSB) from Trichophyton verrucosum (strain HKI 0517).